The sequence spans 1298 residues: MLILRGAPALSAFRHSKLLEQLKQKVSAVSGLYAEFAHFADVNDVLTSEEQQVLDRLLKYGPSVPVQEPSGRLFLVLPRFGTISPWSSKASDIARNCGLTKIQRIERGIAFYVEGQFSEAQAQAIADSLHDRMTQLVLGDHEQAASLFSHAQPKPLTAVDILGGGRAALEKANVELGLALAEDEIDYLITSFNGLGRNPHDIELMMFAQANSEHCRHKIFNASWDIDGQSQEKSLFGMIKNTYQMHSEGVLSAYKDNASVIVGNVAGRFFPDPETRQYGAVQEPVHILMKVETHNHPTAIAPFPGAATGSGGEIRDEGATGRGAKPKAGLTGFTVSNLQIPGFVQPWEVPYGKPERIVTALDIMIEGPLGGAAFNNEFGRPALTGYFRTFEQSITTPHGDEVRGYHKPIMLAGGMGNIREDHVQKGEITVGSKLIVLGGPAMLIGLGGGAASSMATGTSSADLDFASVQRENPEMERRCQEVIDRCWQLGDRNPISFIHDVGAGGLSNAFPELVNDGDRGGRFELRNVPNDEPGMAPLEIWSNESQERYVLAVGVEDFDRFKAICERERCPFAVVGEATAEPQLTVTDSHFGNSPVDMPLEVLLGKVPRMHRSVEREAEIGDDFDPSTLDIEESVQRVLRHPAVASKSFLITIGDRSITGLVARDQMVGPWQVPVADCAVTATSFDVNTGEAMAMGERTPLALLDAPASGRMAIGETLTNIAASCIEKLSDIKLSANWMSAAGHPGEDARLYDTVKAVGMELCPELGITIPVGKDSMSMKTRWSDEGTEKSVTSPLSLIVTGFAPVVDIRQTLTPELRMDKGITDLILIDLGRGQNRMGASILAQTHGKLGRVAPDVDDAEDLKAFFAVIQGLNSDGHILSYHDRSDGGLLVSTLEMAFAGHCGLNLHLDGVADNVSELSAILFNEELGAVIQVRQDATPLVLAQFSAAGLEDCVAVIGQPINNDEVSISFHGEPVFSGQRRLLQRQWAETSYQIQRLRDNAECADQEFDALLEEDNPGLTVKLGFDVNEDIAAPYIKTGVRPQVAVLREQGVNGQVEMAAAFDRAGFNAIDVHMSDILAGRVDLNDFKGMVACGGFSYGDVLGAGEGWAKSALFNSRARDAFQGFFERADSFTLGVCNGCQMLSNLHELIPGSEFWPHFVRNRSEQFEARVAMVQVQESASIFLQGMAGSRMPIAIAHGEGHAEFRNDDALLEADVSGTVALRFVDNHGKVTETYPANPNGSPRGIGGMTTLDGRVTIMMPHPERVFRAVQNSWRPEDWNEDAAWMRMFRNARAWVN.

Residues 303-327 (FPGAATGSGGEIRDEGATGRGAKPK) are disordered. ATP-binding positions include 305–316 (GAATGSGGEIRD), 384–386 (TGY), and A676. Mg(2+)-binding residues include D677, E716, N720, and D884. S886 is an ATP binding site. In terms of domain architecture, Glutamine amidotransferase type-1 spans 1045–1298 (VAVLREQGVN…MFRNARAWVN (254 aa)). C1138 functions as the Nucleophile in the catalytic mechanism. Residues H1263 and E1265 contribute to the active site.

It in the N-terminal section; belongs to the FGAMS family. Monomer.

It is found in the cytoplasm. The catalysed reaction is N(2)-formyl-N(1)-(5-phospho-beta-D-ribosyl)glycinamide + L-glutamine + ATP + H2O = 2-formamido-N(1)-(5-O-phospho-beta-D-ribosyl)acetamidine + L-glutamate + ADP + phosphate + H(+). It participates in purine metabolism; IMP biosynthesis via de novo pathway; 5-amino-1-(5-phospho-D-ribosyl)imidazole from N(2)-formyl-N(1)-(5-phospho-D-ribosyl)glycinamide: step 1/2. Phosphoribosylformylglycinamidine synthase involved in the purines biosynthetic pathway. Catalyzes the ATP-dependent conversion of formylglycinamide ribonucleotide (FGAR) and glutamine to yield formylglycinamidine ribonucleotide (FGAM) and glutamate. This is Phosphoribosylformylglycinamidine synthase from Pseudomonas savastanoi pv. phaseolicola (strain 1448A / Race 6) (Pseudomonas syringae pv. phaseolicola (strain 1448A / Race 6)).